A 457-amino-acid polypeptide reads, in one-letter code: MDTALKRSRSEEPVELPPPAREAEEKEEEEERMEQGLEEEEEVDPRIQGELEKLNQSTDDINRRETELEDARQKFRSVLVEATVKLDELAKKIGKAVEDSKPYWEARRVARQAQLEAQKATQDFQRATEVLRAAKETISLAEQRLLEDDKRQFDSAWQEMLNHATQRVMEAEQTKTRSELVHKETAARYNAAMGRMRQLEKKLKRAINKSKPYFELKAKYYVQLEQLKKTVDDLQAKLALAKGEYKAALKSLERISDEIHERRRSNAMGPRGCGVGAEGSITSVENLPASKPEPDAISVASEAFEDDNCGNLVSEDDSETQSVSSFSSGPTSPSEMPDQFPAVARPGSLDLPSPVSLSEFGMMFPILGPRSECSGASSPECEVERGDRAEGAENKMSDKANNNRVLSSTSAGGGRSRSQSSTSLEGQALETRMKQLSLQCSKGREGIIADIKTVQIG.

The span at 1–12 (MDTALKRSRSEE) shows a compositional bias: basic and acidic residues. The tract at residues 1–68 (MDTALKRSRS…DDINRRETEL (68 aa)) is disordered. Over residues 25–43 (EKEEEEERMEQGLEEEEEV) the composition is skewed to acidic residues. The sufficient for interaction with RAB11A and for guanine nucleotide exchange activity stretch occupies residues 33–267 (MEQGLEEEEE…EIHERRRSNA (235 aa)). Over residues 44–53 (DPRIQGELEK) the composition is skewed to basic and acidic residues. Coiled coils occupy residues 46–92 (RIQG…LAKK), 99–147 (DSKP…RLLE), 156–202 (AWQE…LEKK), and 213–257 (YFEL…RISD). Residues 308–319 (NCGNLVSEDDSE) are compositionally biased toward acidic residues. The segment at 308-347 (NCGNLVSEDDSETQSVSSFSSGPTSPSEMPDQFPAVARPG) is disordered. A compositionally biased stretch (low complexity) spans 322–334 (SVSSFSSGPTSPS). Position 353 is a phosphoserine; by MAPK12 and MAPK9 (Ser-353). Residues 371–427 (SECSGASSPECEVERGDRAEGAENKMSDKANNNRVLSSTSAGGGRSRSQSSTSLEGQ) are disordered. 2 positions are modified to phosphoserine: Ser-377 and Ser-378. The span at 382–398 (EVERGDRAEGAENKMSD) shows a compositional bias: basic and acidic residues. Positions 406-427 (LSSTSAGGGRSRSQSSTSLEGQ) are enriched in low complexity. Phosphoserine is present on Ser-420. Position 423 is a phosphoserine; by MAPK12 (Ser-423).

It belongs to the SH3BP5 family. As to quaternary structure, interacts with BTK. Interacts with all isoforms of MAPK8, MAPK9, MAPK10 and MAPK12. Interacts with GDP-bound and nucleotide-free forms of RAB11A.

The protein resides in the cytoplasmic vesicle membrane. It localises to the mitochondrion. Its function is as follows. Functions as a guanine nucleotide exchange factor (GEF) with specificity for RAB11A and RAB25. Inhibits the auto- and transphosphorylation activity of BTK. Plays a negative regulatory role in BTK-related cytoplasmic signaling in B-cells. May be involved in BCR-induced apoptotic cell death. The sequence is that of SH3 domain-binding protein 5 (Sh3bp5) from Rattus norvegicus (Rat).